The sequence spans 195 residues: Sec-independent protein translocase protein TatB (195 aa).

The helical transmembrane segment at 1–21 threads the bilayer; the sequence is MFDIGFSELALIAVVALVVLG. Residues 130-195 are disordered; that stretch reads EPGSAQPHTP…SSTSPQEKTP (66 aa). 2 stretches are compositionally biased toward low complexity: residues 145-157 and 175-195; these read PVVA…APAP and TTHA…EKTP.

Belongs to the TatB family. As to quaternary structure, the Tat system comprises two distinct complexes: a TatABC complex, containing multiple copies of TatA, TatB and TatC subunits, and a separate TatA complex, containing only TatA subunits. Substrates initially bind to the TatABC complex, which probably triggers association of the separate TatA complex to form the active translocon.

Its subcellular location is the cell inner membrane. Functionally, part of the twin-arginine translocation (Tat) system that transports large folded proteins containing a characteristic twin-arginine motif in their signal peptide across membranes. Together with TatC, TatB is part of a receptor directly interacting with Tat signal peptides. TatB may form an oligomeric binding site that transiently accommodates folded Tat precursor proteins before their translocation. The sequence is that of Sec-independent protein translocase protein TatB from Xanthomonas campestris pv. campestris (strain 8004).